The primary structure comprises 293 residues: Elongation factor Ts (293 aa).

An involved in Mg(2+) ion dislocation from EF-Tu region spans residues 80–83 (TDFV).

The protein belongs to the EF-Ts family.

It is found in the cytoplasm. Associates with the EF-Tu.GDP complex and induces the exchange of GDP to GTP. It remains bound to the aminoacyl-tRNA.EF-Tu.GTP complex up to the GTP hydrolysis stage on the ribosome. This is Elongation factor Ts from Janthinobacterium sp. (strain Marseille) (Minibacterium massiliensis).